Here is a 479-residue protein sequence, read N- to C-terminus: PTS system MurNAc-GlcNAc-specific EIIBC component (479 aa).

A PTS EIIB type-1 domain is found at Gln-5–Glu-87. Cys-27 (phosphocysteine intermediate; for EIIB activity) is an active-site residue. The region spanning Lys-125–Asp-479 is the PTS EIIC type-1 domain. Helical transmembrane passes span Ile-130–Val-150, Val-169–Ile-189, Phe-195–Thr-215, Leu-229–Ile-249, Ile-269–Val-289, Ile-303–Gly-323, Leu-344–Val-364, Ala-379–Leu-399, Phe-403–Ile-423, and Leu-445–Phe-465.

The protein resides in the cell membrane. The catalysed reaction is N-acetyl-beta-D-muramate-(1-&gt;4)-N-acetyl-D-glucosamine(out) + N(pros)-phospho-L-histidyl-[protein] = 6-phospho-N-acetyl-beta-D-muramate-(1-&gt;4)-N-acetyl-D-glucosamine(in) + L-histidyl-[protein]. The protein operates within cell wall biogenesis; peptidoglycan recycling. In terms of biological role, the phosphoenolpyruvate-dependent sugar phosphotransferase system (sugar PTS), a major carbohydrate active transport system, catalyzes the phosphorylation of incoming sugar substrates concomitantly with their translocation across the cell membrane. This system is involved in the uptake and phosphorylation of MurNAc-GlcNAc, the principle peptidoglycan turnover product of S.aureus, yielding cytoplasmic MurNAc 6P-GlcNAc. The chain is PTS system MurNAc-GlcNAc-specific EIIBC component from Staphylococcus saprophyticus subsp. saprophyticus (strain ATCC 15305 / DSM 20229 / NCIMB 8711 / NCTC 7292 / S-41).